The following is a 223-amino-acid chain: Killer cell lectin-like receptor subfamily B member 1B allele B (223 aa).

Residues 1-43 lie on the Cytoplasmic side of the membrane; it reads MDSTTLVYADLNLARIQEPKHDSPPSLSPDTCRCPRWHRLALK. The ITIM motif motif lies at 6 to 11; it reads LVYADL. The short motif at 32-35 is the LCK-binding motif element; it reads CRCP. The chain crosses the membrane as a helical; Signal-anchor for type II membrane protein span at residues 44 to 64; sequence FGCAGLILLVLVVIGLCVLVL. Over 65–223 the chain is Extracellular; that stretch reads SVQKSSVQKI…LNHETPCNDS (159 aa). The C-type lectin domain maps to 101-211; it reads HRDKCFHVSQ…CSSDNRWICQ (111 aa). Disulfide bonds link C122–C210 and C189–C202.

As to quaternary structure, homodimer; disulfide-linked. Interacts with tyrosine kinase LCK. Binds PTPN6/SHP-1 in a phosphorylation-dependent manner. In terms of tissue distribution, expressed in NK cells and a subset of T-cells.

It is found in the membrane. Functionally, receptor for CLEC2D/OCIL. Ligand-binding contributes to inhibition of cytotoxic natural killer (NK) cells. May mediate MHC class I-independent 'missing-self' recognition of allografts, tumor cells and virus-infected cells. The polypeptide is Killer cell lectin-like receptor subfamily B member 1B allele B (Klrb1b) (Mus musculus (Mouse)).